Here is a 398-residue protein sequence, read N- to C-terminus: MEDDSLYLRGEWQFNHFSKLTSSRPDAAFAEIQRTSLPEKSPLSCETRVDLCDDLAPVARQLAPREKLPLSSRRPAAVGAGLQNMGNTCYVNASLQCLTYTPPLANYMLSREHSQTCHRHKGCMLCTMQAHITRALHNPGHVIQPSQALAAGFHRGKQEDAHEFLMFTVDAMKKACLPGHKQVDHHSKDTTLIHQIFGGYWRSQIKCLHCHGISDTFDPYLDIALDIQAAQSVQQALEQLVKPEELNGENAYHCGVCLQRAPASKTLTLHTSAKVLILVLKRFSDVTGNKIAKNVQYPECLDMQPYMSQQNTGPLVYVLYAVLVHAGWSCHNGHYFSYVKAQEGQWYKMDDAEVTASSITSVLSQQAYVLFYIQKSEWERHSESVSRGREPRALGSED.

The USP domain maps to 80–375; it reads AGLQNMGNTC…QAYVLFYIQK (296 aa). The Nucleophile role is filled by C89. Residue H334 is the Proton acceptor of the active site.

Belongs to the peptidase C19 family. USP17 subfamily.

It localises to the nucleus. Its subcellular location is the cytoplasm. It carries out the reaction Thiol-dependent hydrolysis of ester, thioester, amide, peptide and isopeptide bonds formed by the C-terminal Gly of ubiquitin (a 76-residue protein attached to proteins as an intracellular targeting signal).. Functionally, deubiquitinating enzyme that removes conjugated ubiquitin from specific proteins to regulate different cellular processes that may include cell proliferation, progression through the cell cycle, cell migration, and the cellular response to viral infection. Seems to be non-functional in the regulation of apoptosis. This Homo sapiens (Human) protein is Ubiquitin carboxyl-terminal hydrolase 17-like protein 6 (USP17L6P).